The sequence spans 208 residues: Outer-membrane lipoprotein carrier protein (208 aa).

An N-terminal signal peptide occupies residues 1 to 23 (MKKTVKNLTALLTLALAAPWALA).

It belongs to the LolA family. Monomer.

The protein resides in the periplasm. Its function is as follows. Participates in the translocation of lipoproteins from the inner membrane to the outer membrane. Only forms a complex with a lipoprotein if the residue after the N-terminal Cys is not an aspartate (The Asp acts as a targeting signal to indicate that the lipoprotein should stay in the inner membrane). In Actinobacillus succinogenes (strain ATCC 55618 / DSM 22257 / CCUG 43843 / 130Z), this protein is Outer-membrane lipoprotein carrier protein.